Here is a 158-residue protein sequence, read N- to C-terminus: UPAR/Ly6 domain-containing protein crim (158 aa).

An N-terminal signal peptide occupies residues 1–22 (MHYHTNLIAALLLAALIHEGSA). The Extracellular segment spans residues 23–136 (IWCYRCTSAT…FCFLDHRCNG (114 aa)). N-linked (GlcNAc...) asparagine glycosylation occurs at Asn-107. Asn-135 is lipidated: GPI-anchor amidated asparagine. Residues 136–158 (GASGLQTSAVIGLLTLIPALLLR) constitute a propeptide, removed in mature form. The chain crosses the membrane as a helical span at residues 137–157 (ASGLQTSAVIGLLTLIPALLL). Position 158 (Arg-158) is a topological domain, cytoplasmic.

This sequence belongs to the quiver family.

The protein resides in the membrane. Required for septate junction assembly possibly by organizing the preassembly and transport of septate junction proteins. Involved in epithelial cell septate junction-mediated paracellular barrier functions of trachea, hindgut and salivary gland. This Drosophila melanogaster (Fruit fly) protein is UPAR/Ly6 domain-containing protein crim.